Here is a 246-residue protein sequence, read N- to C-terminus: Chaperone protein SefB (246 aa).

The first 24 residues, 1–24 (MYILNKFIRRTVIFFFFCYLPIAS), serve as a signal peptide directing secretion. A disulfide bridge connects residues Cys124 and Cys155.

Belongs to the periplasmic pilus chaperone family.

The protein resides in the periplasm. In terms of biological role, required for the biogenesis of the SefA (SEF14) fimbria. The sequence is that of Chaperone protein SefB (sefB) from Salmonella enteritidis.